We begin with the raw amino-acid sequence, 33 residues long: MSDIN-like toxin proprotein 6 (33 aa).

The propeptide occupies 1-10; sequence MSDINATRLP. Positions 11-20 form a cross-link, cyclopeptide (Leu-Pro); that stretch reads LILLAALGIP. Residues 21 to 33 constitute a propeptide that is removed on maturation; it reads SDDADSTLTRGER.

Belongs to the MSDIN fungal toxin family. Processed by the macrocyclase-peptidase enzyme POPB to yield a toxic cyclic decapeptide. POPB first removes 10 residues from the N-terminus. Conformational trapping of the remaining peptide forces the enzyme to release this intermediate rather than proceed to macrocyclization. The enzyme rebinds the remaining peptide in a different conformation and catalyzes macrocyclization of the N-terminal 10 residues.

Its function is as follows. Probable toxin that belongs to the MSDIN-like toxin family responsible for a large number of food poisoning cases and deaths. This chain is MSDIN-like toxin proprotein 6, found in Amanita phalloides (Death cap).